The chain runs to 334 residues: Holliday junction branch migration complex subunit RuvB (334 aa).

The large ATPase domain (RuvB-L) stretch occupies residues 1-182 (MDKRMVDQEF…FGVHLRLEYY (182 aa)). Residues L21, R22, G63, K66, T67, T68, 129-131 (EDF), R172, Y182, and R219 each bind ATP. T67 provides a ligand contact to Mg(2+). Positions 183–253 (NENDLKEIIT…TTKRALQLLQ (71 aa)) are small ATPAse domain (RuvB-S). The head domain (RuvB-H) stretch occupies residues 256-334 (QHGLDYIDHK…HFNTTNEKRE (79 aa)). DNA contacts are provided by R292, R311, and R316.

This sequence belongs to the RuvB family. In terms of assembly, homohexamer. Forms an RuvA(8)-RuvB(12)-Holliday junction (HJ) complex. HJ DNA is sandwiched between 2 RuvA tetramers; dsDNA enters through RuvA and exits via RuvB. An RuvB hexamer assembles on each DNA strand where it exits the tetramer. Each RuvB hexamer is contacted by two RuvA subunits (via domain III) on 2 adjacent RuvB subunits; this complex drives branch migration. In the full resolvosome a probable DNA-RuvA(4)-RuvB(12)-RuvC(2) complex forms which resolves the HJ.

Its subcellular location is the cytoplasm. It catalyses the reaction ATP + H2O = ADP + phosphate + H(+). The RuvA-RuvB-RuvC complex processes Holliday junction (HJ) DNA during genetic recombination and DNA repair, while the RuvA-RuvB complex plays an important role in the rescue of blocked DNA replication forks via replication fork reversal (RFR). RuvA specifically binds to HJ cruciform DNA, conferring on it an open structure. The RuvB hexamer acts as an ATP-dependent pump, pulling dsDNA into and through the RuvAB complex. RuvB forms 2 homohexamers on either side of HJ DNA bound by 1 or 2 RuvA tetramers; 4 subunits per hexamer contact DNA at a time. Coordinated motions by a converter formed by DNA-disengaged RuvB subunits stimulates ATP hydrolysis and nucleotide exchange. Immobilization of the converter enables RuvB to convert the ATP-contained energy into a lever motion, pulling 2 nucleotides of DNA out of the RuvA tetramer per ATP hydrolyzed, thus driving DNA branch migration. The RuvB motors rotate together with the DNA substrate, which together with the progressing nucleotide cycle form the mechanistic basis for DNA recombination by continuous HJ branch migration. Branch migration allows RuvC to scan DNA until it finds its consensus sequence, where it cleaves and resolves cruciform DNA. This is Holliday junction branch migration complex subunit RuvB from Staphylococcus epidermidis (strain ATCC 35984 / DSM 28319 / BCRC 17069 / CCUG 31568 / BM 3577 / RP62A).